The following is a 328-amino-acid chain: Formimidoylglutamase (328 aa).

Positions 133, 159, 161, 163, 253, and 255 each coordinate Mn(2+).

This sequence belongs to the arginase family. Mn(2+) is required as a cofactor.

The enzyme catalyses N-formimidoyl-L-glutamate + H2O = formamide + L-glutamate. Its pathway is amino-acid degradation; L-histidine degradation into L-glutamate; L-glutamate from N-formimidoyl-L-glutamate (hydrolase route): step 1/1. Its function is as follows. Catalyzes the conversion of N-formimidoyl-L-glutamate to L-glutamate and formamide. The chain is Formimidoylglutamase from Streptococcus pyogenes serotype M6 (strain ATCC BAA-946 / MGAS10394).